A 348-amino-acid chain; its full sequence is UDP-3-O-acylglucosamine N-acyltransferase (348 aa).

His241 functions as the Proton acceptor in the catalytic mechanism.

This sequence belongs to the transferase hexapeptide repeat family. LpxD subfamily. As to quaternary structure, homotrimer.

It catalyses the reaction a UDP-3-O-[(3R)-3-hydroxyacyl]-alpha-D-glucosamine + a (3R)-hydroxyacyl-[ACP] = a UDP-2-N,3-O-bis[(3R)-3-hydroxyacyl]-alpha-D-glucosamine + holo-[ACP] + H(+). The protein operates within bacterial outer membrane biogenesis; LPS lipid A biosynthesis. Catalyzes the N-acylation of UDP-3-O-acylglucosamine using 3-hydroxyacyl-ACP as the acyl donor. Is involved in the biosynthesis of lipid A, a phosphorylated glycolipid that anchors the lipopolysaccharide to the outer membrane of the cell. The polypeptide is UDP-3-O-acylglucosamine N-acyltransferase (Neisseria meningitidis serogroup C (strain 053442)).